Reading from the N-terminus, the 224-residue chain is ATP synthase subunit a (224 aa).

6 helical membrane passes run 17-37 (FSLN…IYWL), 72-92 (IFIS…FPYI), 99-119 (LTLT…YGWI), 125-145 (MFAH…MVCI), 166-186 (IAGH…SYIL), and 187-207 (VTFL…VAMI).

Belongs to the ATPase A chain family. In terms of assembly, F-type ATPases have 2 components, CF(1) - the catalytic core - and CF(0) - the membrane proton channel. CF(1) has five subunits: alpha(3), beta(3), gamma(1), delta(1), epsilon(1). CF(0) has three main subunits: a, b and c.

It is found in the mitochondrion inner membrane. Its function is as follows. Mitochondrial membrane ATP synthase (F(1)F(0) ATP synthase or Complex V) produces ATP from ADP in the presence of a proton gradient across the membrane which is generated by electron transport complexes of the respiratory chain. F-type ATPases consist of two structural domains, F(1) - containing the extramembraneous catalytic core and F(0) - containing the membrane proton channel, linked together by a central stalk and a peripheral stalk. During catalysis, ATP synthesis in the catalytic domain of F(1) is coupled via a rotary mechanism of the central stalk subunits to proton translocation. Key component of the proton channel; it may play a direct role in the translocation of protons across the membrane. The polypeptide is ATP synthase subunit a (mt:ATPase6) (Drosophila melanogaster (Fruit fly)).